The sequence spans 756 residues: NUT family member 2F (756 aa).

Disordered stretches follow at residues 173–200 (GNAR…PDDS), 293–438 (IQKS…TSDP), 511–639 (RAAP…LPGM), and 653–756 (RLSQ…HCSQ). The span at 304 to 321 (SLPPPAPPRLEPRGPPAP) shows a compositional bias: pro residues. Over residues 417 to 427 (EGQREKGKVEQ) the composition is skewed to basic and acidic residues. The span at 543 to 560 (QRVSVETSPPQTAAQDPQ) shows a compositional bias: polar residues. Low complexity predominate over residues 654-665 (LSQSPVPSSGLL). Over residues 746–756 (SRRKKKRHCSQ) the composition is skewed to basic residues.

It belongs to the NUT family.

This chain is NUT family member 2F (NUTM2F), found in Homo sapiens (Human).